The following is a 378-amino-acid chain: Ribosomal RNA large subunit methyltransferase G (378 aa).

Belongs to the methyltransferase superfamily. RlmG family.

It is found in the cytoplasm. It carries out the reaction guanosine(1835) in 23S rRNA + S-adenosyl-L-methionine = N(2)-methylguanosine(1835) in 23S rRNA + S-adenosyl-L-homocysteine + H(+). Specifically methylates the guanine in position 1835 (m2G1835) of 23S rRNA. In Salmonella agona (strain SL483), this protein is Ribosomal RNA large subunit methyltransferase G.